Reading from the N-terminus, the 112-residue chain is MASPNGGDDFESSLLSFEKLDRASPDLWPEQLPGVADFAASCKNPITNSPPKWMAELESEDIEMLKKLGSLTTANLMEKVKGLQNLAYQLGLEESREMTRGKFLNILERPKK.

This sequence belongs to the lin-52 family. Component of the DREAM complex. In terms of tissue distribution, expressed in the brain, liver and retina. Highly expressed in the retinal ganglion cell and inner nuclear layers at the parr stage. Expressed at a lower level in inner segments of some retinal photoreceptors.

In terms of biological role, may be involved in retinal development. This chain is Protein lin-52 homolog (lin52), found in Oncorhynchus mykiss (Rainbow trout).